Consider the following 237-residue polypeptide: MKPETFYNLLAEQNLPLSNQQKEQFERYFELLVEWNEKINLTAITDKEEVYLKHFYDSIAPILQGLIPNETIKLLDIGAGAGFPSLPMKILYPELDVTIIDSLNKRINFLQLLAQELDLNGVHFYHGRAEDFAQDKNFRAQYDFVTARAVARMQVLSELTIPYLKVGGKLLALKASNAPEELLEAKNALNLLFSKVEDNLSYALPNRDPRYITVVEKKKETPNKYPRKAGMPNKRPL.

Residues Gly78, Phe83, 129-130 (AE), and Arg148 each bind S-adenosyl-L-methionine. The interval 218-237 (KKETPNKYPRKAGMPNKRPL) is disordered.

This sequence belongs to the methyltransferase superfamily. RNA methyltransferase RsmG family.

It localises to the cytoplasm. Functionally, specifically methylates the N7 position of a guanine in 16S rRNA. This is Ribosomal RNA small subunit methyltransferase G from Streptococcus pneumoniae (strain ATCC BAA-255 / R6).